A 304-amino-acid polypeptide reads, in one-letter code: Quinolinate synthase (304 aa).

Iminosuccinate is bound by residues His24 and Ser41. Cys86 is a [4Fe-4S] cluster binding site. Residues 112–114 (YVN) and Ser129 contribute to the iminosuccinate site. Cys171 serves as a coordination point for [4Fe-4S] cluster. Iminosuccinate is bound by residues 197-199 (HPE) and Thr214. Cys259 is a [4Fe-4S] cluster binding site.

The protein belongs to the quinolinate synthase family. Type 2 subfamily. The cofactor is [4Fe-4S] cluster.

The protein localises to the cytoplasm. It catalyses the reaction iminosuccinate + dihydroxyacetone phosphate = quinolinate + phosphate + 2 H2O + H(+). Its pathway is cofactor biosynthesis; NAD(+) biosynthesis; quinolinate from iminoaspartate: step 1/1. In terms of biological role, catalyzes the condensation of iminoaspartate with dihydroxyacetone phosphate to form quinolinate. This is Quinolinate synthase from Methanosarcina barkeri (strain Fusaro / DSM 804).